A 438-amino-acid chain; its full sequence is V-type ATP synthase beta chain (438 aa).

It belongs to the ATPase alpha/beta chains family.

Its function is as follows. Produces ATP from ADP in the presence of a proton gradient across the membrane. The V-type beta chain is a regulatory subunit. In Chlamydia abortus (strain DSM 27085 / S26/3) (Chlamydophila abortus), this protein is V-type ATP synthase beta chain.